We begin with the raw amino-acid sequence, 196 residues long: NADPH:quinone oxidoreductase (196 aa).

The protein belongs to the SsuE family. In terms of assembly, homotetramer. It depends on FMN as a cofactor.

The protein resides in the cell membrane. It carries out the reaction a quinone + NADH + H(+) = a quinol + NAD(+). The catalysed reaction is a quinone + NADPH + H(+) = a quinol + NADP(+). In terms of biological role, the enzyme apparently serves as a quinone reductase in connection with conjugation reactions of hydroquinones involved in detoxification pathways. This is NADPH:quinone oxidoreductase (NQR) from Arabidopsis thaliana (Mouse-ear cress).